A 430-amino-acid polypeptide reads, in one-letter code: Serine--tRNA ligase (430 aa).

Residue 237-239 participates in L-serine binding; the sequence is TAE. 268 to 270 provides a ligand contact to ATP; the sequence is RSE. E291 provides a ligand contact to L-serine. 355–358 provides a ligand contact to ATP; sequence EISS. Residue S391 participates in L-serine binding.

This sequence belongs to the class-II aminoacyl-tRNA synthetase family. Type-1 seryl-tRNA synthetase subfamily. In terms of assembly, homodimer. The tRNA molecule binds across the dimer.

Its subcellular location is the cytoplasm. It carries out the reaction tRNA(Ser) + L-serine + ATP = L-seryl-tRNA(Ser) + AMP + diphosphate + H(+). The enzyme catalyses tRNA(Sec) + L-serine + ATP = L-seryl-tRNA(Sec) + AMP + diphosphate + H(+). It participates in aminoacyl-tRNA biosynthesis; selenocysteinyl-tRNA(Sec) biosynthesis; L-seryl-tRNA(Sec) from L-serine and tRNA(Sec): step 1/1. In terms of biological role, catalyzes the attachment of serine to tRNA(Ser). Is also able to aminoacylate tRNA(Sec) with serine, to form the misacylated tRNA L-seryl-tRNA(Sec), which will be further converted into selenocysteinyl-tRNA(Sec). The chain is Serine--tRNA ligase from Salmonella schwarzengrund (strain CVM19633).